The sequence spans 87 residues: Exodeoxyribonuclease 7 small subunit (87 aa).

Belongs to the XseB family. In terms of assembly, heterooligomer composed of large and small subunits.

Its subcellular location is the cytoplasm. It catalyses the reaction Exonucleolytic cleavage in either 5'- to 3'- or 3'- to 5'-direction to yield nucleoside 5'-phosphates.. Functionally, bidirectionally degrades single-stranded DNA into large acid-insoluble oligonucleotides, which are then degraded further into small acid-soluble oligonucleotides. This Solidesulfovibrio magneticus (strain ATCC 700980 / DSM 13731 / RS-1) (Desulfovibrio magneticus) protein is Exodeoxyribonuclease 7 small subunit.